The primary structure comprises 435 residues: Glutamate-1-semialdehyde 2,1-aminomutase (435 aa).

K270 carries the post-translational modification N6-(pyridoxal phosphate)lysine.

It belongs to the class-III pyridoxal-phosphate-dependent aminotransferase family. HemL subfamily. In terms of assembly, homodimer. Requires pyridoxal 5'-phosphate as cofactor.

It is found in the cytoplasm. The catalysed reaction is (S)-4-amino-5-oxopentanoate = 5-aminolevulinate. It participates in porphyrin-containing compound metabolism; protoporphyrin-IX biosynthesis; 5-aminolevulinate from L-glutamyl-tRNA(Glu): step 2/2. This is Glutamate-1-semialdehyde 2,1-aminomutase from Wigglesworthia glossinidia brevipalpis.